A 984-amino-acid chain; its full sequence is G patch domain-containing protein TGH homolog (984 aa).

The segment covering 130-144 (EHARKQASKEQKERP) has biased composition (basic and acidic residues). Residues 130-153 (EHARKQASKEQKERPSAIPGPIPD) form a disordered region. Residues 160–202 (TTSIGVKLLMKMGWRQGRSIRDAHADSLYESRREARKAFLALS) enclose the G-patch domain. The SURP motif repeat unit spans residues 408 to 450 (LIEGCAAMVARCGKHIEDFYKEKSKTNTQFNFLNEGDGCSYYA). 4 disordered regions span residues 464 to 503 (QKPD…SSFP), 679 to 717 (TRTN…ESSS), 775 to 806 (LGLD…GISR), and 820 to 984 (ESAL…HHKR). Residues 473–495 (SSDKLTAENRGKILGERPLDRST) show a composition bias toward basic and acidic residues. Residues 679–695 (TRTNEVESSSIAPQHTS) show a composition bias toward polar residues. The span at 697–709 (AGATETEAKGAAT) shows a compositional bias: low complexity. Residues 814-859 (QEIKENESALDKEEIANASADVPSDNVEELGLKYEKQEHRAEKSRS) are a coiled coil. A compositionally biased stretch (basic and acidic residues) spans 843-858 (LGLKYEKQEHRAEKSR). Basic residues-rich tracts occupy residues 882-892 (SRERRSRHKIR), 905-922 (HRSK…RRSR), and 934-946 (TKRK…HHRT). A compositionally biased stretch (basic and acidic residues) spans 947-974 (RNPDTDSSDHEYEERHKSSSRRSSDKDR). A compositionally biased stretch (basic residues) spans 975-984 (SRRRSRHHKR).

Its subcellular location is the nucleus. Functions as a component of microRNA (miRNA) and small interfering RNA (siRNA) biogenesis. May assist Dicer-like (DCL) proteins to efficiently process and/or recruit the precursors of miRNAs and siRNAs. The sequence is that of G patch domain-containing protein TGH homolog from Oryza sativa subsp. japonica (Rice).